The chain runs to 250 residues: Peptidyl-tRNA hydrolase (250 aa).

A tRNA-binding site is contributed by tyrosine 14. Histidine 19 functions as the Proton acceptor in the catalytic mechanism. Positions 64, 66, and 112 each coordinate tRNA. The tract at residues 192–250 (MGDGNQRPGGVKTDPAQLEKAPPKAQSHIRQARQNQKKPNIPESGPMAEMLKKLLGKKD) is disordered. The span at 219 to 229 (HIRQARQNQKK) shows a compositional bias: polar residues. Residues 241–250 (MLKKLLGKKD) are compositionally biased toward basic and acidic residues.

Belongs to the PTH family. As to quaternary structure, monomer.

The protein resides in the cytoplasm. It carries out the reaction an N-acyl-L-alpha-aminoacyl-tRNA + H2O = an N-acyl-L-amino acid + a tRNA + H(+). Functionally, hydrolyzes ribosome-free peptidyl-tRNAs (with 1 or more amino acids incorporated), which drop off the ribosome during protein synthesis, or as a result of ribosome stalling. In terms of biological role, catalyzes the release of premature peptidyl moieties from peptidyl-tRNA molecules trapped in stalled 50S ribosomal subunits, and thus maintains levels of free tRNAs and 50S ribosomes. This Brucella abortus (strain 2308) protein is Peptidyl-tRNA hydrolase.